The sequence spans 688 residues: Potassium-transporting ATPase ATP-binding subunit (688 aa).

Helical transmembrane passes span 34–54 (PVMF…LDIL), 62–82 (AMFT…ANMA), 219–239 (VALT…TATL), and 260–280 (VLVA…LSAI). The active-site 4-aspartylphosphate intermediate is the Asp313. ATP-binding positions include Asp350, Glu354, 383 to 390 (FSAQTRMS), and Lys401. The Mg(2+) site is built by Asp524 and Asp528. Transmembrane regions (helical) follow at residues 594–614 (FAII…LNIM), 622–642 (AILS…PLAL), and 662–682 (IYGL…DLLL).

The protein belongs to the cation transport ATPase (P-type) (TC 3.A.3) family. Type IA subfamily. The system is composed of three essential subunits: KdpA, KdpB and KdpC.

The protein resides in the cell inner membrane. The catalysed reaction is K(+)(out) + ATP + H2O = K(+)(in) + ADP + phosphate + H(+). Functionally, part of the high-affinity ATP-driven potassium transport (or Kdp) system, which catalyzes the hydrolysis of ATP coupled with the electrogenic transport of potassium into the cytoplasm. This subunit is responsible for energy coupling to the transport system and for the release of the potassium ions to the cytoplasm. This Yersinia pestis bv. Antiqua (strain Antiqua) protein is Potassium-transporting ATPase ATP-binding subunit.